A 160-amino-acid polypeptide reads, in one-letter code: MLRTMLTAKIHRATVTQADLHYVGSVTIDADLLAAADLLPGEQVTIVDINNGARLETYAIAGPAGSGIIGINGAAARLVQPGDLVIIIAYGLMDDAEARRHVPKVLFVDAANRIIGHGDDPAEPLPGDPSSLRGDIPVDIPVDIPVPTAAAAVRSAMATQ.

The Schiff-base intermediate with substrate; via pyruvic acid role is filled by Ser25. Ser25 carries the pyruvic acid (Ser) modification. Thr57 serves as a coordination point for substrate. Tyr58 acts as the Proton donor in catalysis. 73-75 (GAA) contacts substrate.

This sequence belongs to the PanD family. As to quaternary structure, heterooctamer of four alpha and four beta subunits. Pyruvate serves as cofactor. In terms of processing, is synthesized initially as an inactive proenzyme, which is activated by self-cleavage at a specific serine bond to produce a beta-subunit with a hydroxyl group at its C-terminus and an alpha-subunit with a pyruvoyl group at its N-terminus.

It localises to the cytoplasm. It carries out the reaction L-aspartate + H(+) = beta-alanine + CO2. It participates in cofactor biosynthesis; (R)-pantothenate biosynthesis; beta-alanine from L-aspartate: step 1/1. Its function is as follows. Catalyzes the pyruvoyl-dependent decarboxylation of aspartate to produce beta-alanine. This Frankia casuarinae (strain DSM 45818 / CECT 9043 / HFP020203 / CcI3) protein is Aspartate 1-decarboxylase 2.